The following is a 445-amino-acid chain: Ribosomal protein uS12 methylthiotransferase RimO (445 aa).

The MTTase N-terminal domain maps to 4-119 (IKVALVSLGC…LLESIKVFLK (116 aa)). Residues Cys-13, Cys-48, Cys-82, Cys-156, Cys-160, and Cys-163 each contribute to the [4Fe-4S] cluster site. A Radical SAM core domain is found at 142–372 (TTPTYTAYVR…MILQQSISKD (231 aa)). The region spanning 375–441 (KEKIGKIYEV…EYDLIGVVYN (67 aa)) is the TRAM domain.

It belongs to the methylthiotransferase family. RimO subfamily. [4Fe-4S] cluster serves as cofactor.

Its subcellular location is the cytoplasm. The catalysed reaction is L-aspartate(89)-[ribosomal protein uS12]-hydrogen + (sulfur carrier)-SH + AH2 + 2 S-adenosyl-L-methionine = 3-methylsulfanyl-L-aspartate(89)-[ribosomal protein uS12]-hydrogen + (sulfur carrier)-H + 5'-deoxyadenosine + L-methionine + A + S-adenosyl-L-homocysteine + 2 H(+). In terms of biological role, catalyzes the methylthiolation of an aspartic acid residue of ribosomal protein uS12. This Clostridium botulinum (strain Langeland / NCTC 10281 / Type F) protein is Ribosomal protein uS12 methylthiotransferase RimO.